We begin with the raw amino-acid sequence, 438 residues long: Transmembrane protease serine 11F (438 aa).

The Cytoplasmic segment spans residues 1–32 (MMYAPVEFSEAEFSRAEYQRKQQFWDSVRLAL). Residues 33–53 (FTLAIVAIIGIAIGIVTHFVV) traverse the membrane as a helical; Signal-anchor for type II membrane protein segment. At 54-438 (EDDKSFYYLA…RDWIASKTGM (385 aa)) the chain is on the extracellular side. The region spanning 57–175 (KSFYYLASFK…PSFRLTPIDS (119 aa)) is the SEA domain. Positions 206–437 (IVQGRETAME…YRDWIASKTG (232 aa)) constitute a Peptidase S1 domain. A disulfide bond links Cys233 and Cys249. Active-site charge relay system residues include His248 and Asp293. 2 disulfides stabilise this stretch: Cys358-Cys374 and Cys385-Cys413. Catalysis depends on Ser389, which acts as the Charge relay system.

Belongs to the peptidase S1 family.

It localises to the membrane. In terms of biological role, probable serine protease. The protein is Transmembrane protease serine 11F (TMPRSS11F) of Homo sapiens (Human).